The sequence spans 158 residues: Transcriptional repressor NrdR (158 aa).

Residues 3-34 (CPSCQNTDSRVLESRAAEGGRSVRRRRECLNC) fold into a zinc finger. Residues 49-139 (ITVIKRNGHR…VYRHFRSVSD (91 aa)) form the ATP-cone domain.

The protein belongs to the NrdR family. Requires Zn(2+) as cofactor.

Functionally, negatively regulates transcription of bacterial ribonucleotide reductase nrd genes and operons by binding to NrdR-boxes. The sequence is that of Transcriptional repressor NrdR from Synechococcus sp. (strain CC9311).